Consider the following 710-residue polypeptide: Solute carrier organic anion transporter family member 3A1 (710 aa).

An N-acetylmethionine modification is found at Met-1. Over residues Met-1–Ser-15 the composition is skewed to gly residues. The interval Met-1–Arg-25 is disordered. Residues Met-1–Lys-40 lie on the Cytoplasmic side of the membrane. A helical membrane pass occupies residues Ile-41–Leu-60. At Val-61–Gly-79 the chain is on the extracellular side. The chain crosses the membrane as a helical span at residues Val-80 to Gly-100. Residues Ala-101–Pro-106 lie on the Cytoplasmic side of the membrane. The helical transmembrane segment at Arg-107–His-131 threads the bilayer. Residues Gln-132–Asn-174 lie on the Extracellular side of the membrane. 2 N-linked (GlcNAc...) asparagine glycosylation sites follow: Asn-153 and Asn-169. The helical transmembrane segment at Met-175–Asp-203 threads the bilayer. At Asp-204–Leu-222 the chain is on the cytoplasmic side. Residues Val-223–Ala-243 form a helical membrane-spanning segment. Topologically, residues Val-244–Ile-261 are extracellular. The helical transmembrane segment at Gly-262–Pro-286 threads the bilayer. The Cytoplasmic portion of the chain corresponds to Gln-287 to His-344. Residues Leu-345 to Ala-366 form a helical membrane-spanning segment. The Extracellular segment spans residues Gly-367–Ser-386. Residue Asn-381 is glycosylated (N-linked (GlcNAc...) asparagine). Residues Ala-387–Val-410 form a helical membrane-spanning segment. The Cytoplasmic portion of the chain corresponds to Lys-411–Ser-414. Residues Leu-415 to Phe-438 form a helical membrane-spanning segment. Residues Leu-439–Phe-539 lie on the Extracellular side of the membrane. Asn-457 carries N-linked (GlcNAc...) asparagine glycosylation. A Kazal-like domain is found at Leu-465–Thr-513. Disulfide bonds link Cys-471/Cys-497, Cys-475/Cys-486, and Cys-477/Cys-501. 3 N-linked (GlcNAc...) asparagine glycosylation sites follow: Asn-502, Asn-505, and Asn-519. A helical membrane pass occupies residues Leu-540–Ile-562. At Arg-563 to Ser-571 the chain is on the cytoplasmic side. Residues Tyr-572–Ile-597 traverse the membrane as a helical segment. Residues Asp-598–Ala-630 lie on the Extracellular side of the membrane. A helical transmembrane segment spans residues Ile-631–Leu-648. Topologically, residues Arg-649–Asn-705 are cytoplasmic.

The protein belongs to the organo anion transporter (TC 2.A.60) family. In terms of tissue distribution, widely expressed.

The protein localises to the basolateral cell membrane. Its subcellular location is the apical cell membrane. The protein resides in the basal cell membrane. It carries out the reaction L-thyroxine(out) = L-thyroxine(in). The enzyme catalyses prostaglandin E1(out) = prostaglandin E1(in). It catalyses the reaction prostaglandin E2(out) = prostaglandin E2(in). The catalysed reaction is prostaglandin F2alpha(out) = prostaglandin F2alpha(in). It carries out the reaction (5Z,8Z,11Z,14Z)-eicosatetraenoate(out) = (5Z,8Z,11Z,14Z)-eicosatetraenoate(in). The enzyme catalyses taurocholate(out) = taurocholate(in). It catalyses the reaction glycocholate(out) = glycocholate(in). The catalysed reaction is estrone 3-sulfate(out) = estrone 3-sulfate(in). It carries out the reaction argipressin(out) = argipressin(in). Its function is as follows. Putative organic anion antiporter with apparent broad substrate specificity. Recognizes various substrates including thyroid hormone L-thyroxine, prostanoids such as prostaglandin E1 and E2, bile acids such as taurocholate, glycolate and glycochenodeoxycholate and peptide hormones such as L-arginine vasopressin, likely operating in a tissue-specific manner. The transport mechanism, its electrogenicity and potential tissue-specific counterions remain to be elucidated. In Mus musculus (Mouse), this protein is Solute carrier organic anion transporter family member 3A1 (Slco3a1).